Consider the following 633-residue polypeptide: DEAD-box ATP-dependent RNA helicase 37 (633 aa).

The tract at residues 1-110 (MSASWADVAD…WNNRSGGWDR (110 aa)) is disordered. Ser2 carries the post-translational modification N-acetylserine. Residues 11-25 (SENTGSGSSNQNSHP) show a composition bias toward polar residues. Gly residues-rich tracts occupy residues 68-80 (GGSG…GGGY) and 87-101 (PGSG…GGGW). The Q motif signature appears at 159 to 187 (NTFAEIDLGEALNLNIRRCKYVKPTPVQR). Residues 190 to 374 (IPILLEGRDL…ADFLANYIFL (185 aa)) form the Helicase ATP-binding domain. An ATP-binding site is contributed by 203-210 (AQTGSGKT). A DEAD box motif is present at residues 318–321 (DEAD). A Helicase C-terminal domain is found at 401-552 (HLMDLLHAQR…EVPEWLTRYA (152 aa)). The segment at 555–600 (SSFGGGKNRRSGGRFGGRDFRREGSFGSGRGGYGGGGGGYGGGGGY) is disordered. Gly residues predominate over residues 580–600 (FGSGRGGYGGGGGGYGGGGGY).

This sequence belongs to the DEAD box helicase family. DDX3/DED1 subfamily.

It carries out the reaction ATP + H2O = ADP + phosphate + H(+). The chain is DEAD-box ATP-dependent RNA helicase 37 (RH37) from Arabidopsis thaliana (Mouse-ear cress).